Consider the following 233-residue polypeptide: tRNA (guanine-N(1)-)-methyltransferase (233 aa).

S-adenosyl-L-methionine-binding positions include G110 and I130–M135.

Belongs to the RNA methyltransferase TrmD family. In terms of assembly, homodimer.

It localises to the cytoplasm. The catalysed reaction is guanosine(37) in tRNA + S-adenosyl-L-methionine = N(1)-methylguanosine(37) in tRNA + S-adenosyl-L-homocysteine + H(+). Specifically methylates guanosine-37 in various tRNAs. The protein is tRNA (guanine-N(1)-)-methyltransferase of Finegoldia magna (strain ATCC 29328 / DSM 20472 / WAL 2508) (Peptostreptococcus magnus).